We begin with the raw amino-acid sequence, 947 residues long: Protocadherin alpha-4 (947 aa).

The signal sequence occupies residues Met-1 to Ser-29. Cadherin domains lie at Gln-30–Phe-133, Pro-134–Phe-242, Asp-243–Leu-350, Glu-351–Phe-455, Ala-456–Leu-565, and Ser-573–Arg-681. Over Gln-30–Asn-697 the chain is Extracellular. A disulfide bond links Cys-96 and Cys-102. N-linked (GlcNAc...) asparagine glycosylation is found at Asn-257 and Asn-265. Thr-438 carries an O-linked (Man) threonine glycan. Ser-440 and Ser-442 each carry an O-linked (Man) serine glycan. An N-linked (GlcNAc...) asparagine glycan is attached at Asn-548. Residues Val-698–Tyr-718 traverse the membrane as a helical segment. The Cytoplasmic segment spans residues Thr-719–Gln-947. 6 PXXP repeats span residues Pro-734 to Pro-737, Pro-774 to Ser-777, Pro-796 to Pro-799, Pro-829 to Pro-832, Pro-870 to Pro-873, and Pro-888 to Pro-891. A 6 X 4 AA repeats of P-X-X-P region spans residues Pro-734–Pro-891. The segment at Val-738–Gln-947 is required for interaction with FYN. 2 disordered regions span residues Gly-761–Tyr-805 and Ile-824–Pro-853. The interval Pro-891–Gln-947 is disordered. Over residues Asp-906–Lys-920 the composition is skewed to basic and acidic residues.

As to quaternary structure, forms homodimers in trans (molecules expressed by two different cells). Forms promiscuous heterodimers in cis (at the plasma membrane of the same cell) with other protocadherins. Interacts with FYN. As to expression, detected in brain throughout embryonic development. Detected in adult brain, in particular in cerebellum and forebrain.

The protein localises to the cell membrane. Its function is as follows. Calcium-dependent cell-adhesion protein involved in cells self-recognition and non-self discrimination. Thereby, it is involved in the establishment and maintenance of specific neuronal connections in the brain. This chain is Protocadherin alpha-4, found in Mus musculus (Mouse).